We begin with the raw amino-acid sequence, 81 residues long: Sulfur carrier protein TusA (81 aa).

Cys-19 acts as the Cysteine persulfide intermediate in catalysis.

The protein belongs to the sulfur carrier protein TusA family.

The protein localises to the cytoplasm. In terms of biological role, sulfur carrier protein which probably makes part of a sulfur-relay system. The protein is Sulfur carrier protein TusA of Shewanella sediminis (strain HAW-EB3).